A 294-amino-acid polypeptide reads, in one-letter code: MHPRFQTAFAQLADNLQSALAPILADHHFPAMLTAEQVSTLKNTAGLDEDALAFALLPLAATCARTDLSHFNVGAIARGVSGNWYFGANMEFLGATMQQTVHAEQSAISHAWLRGEKGLAAVTVNYTPCGHCRQFMNELNSGLDLRIHLPGRAPHTLRDYLPDAFGPKDLEIKTLLMDEQDHGFTLTGDTLTQAAITAANKSHMPYSHSPSGVALECKDGRIFTGSYAENAAFNPTLPPLQGALNLLSLNGYDYADIQRAILAEKGDAALIQWDATAATLKALGCHNIDRVLLG.

CMP/dCMP-type deaminase domains follow at residues 48–168 (DEDA…FGPK) and 186–294 (LTGD…VLLG). Substrate is bound at residue 89 to 91 (NME). Residue His-102 participates in Zn(2+) binding. Glu-104 serves as the catalytic Proton donor. The Zn(2+) site is built by Cys-129 and Cys-132.

Belongs to the cytidine and deoxycytidylate deaminase family. Homodimer. Requires Zn(2+) as cofactor.

It carries out the reaction cytidine + H2O + H(+) = uridine + NH4(+). It catalyses the reaction 2'-deoxycytidine + H2O + H(+) = 2'-deoxyuridine + NH4(+). Its function is as follows. This enzyme scavenges exogenous and endogenous cytidine and 2'-deoxycytidine for UMP synthesis. This is Cytidine deaminase from Salmonella dublin (strain CT_02021853).